A 485-amino-acid chain; its full sequence is Cysteine--tRNA ligase (485 aa).

C27 contacts Zn(2+). The short motif at 29–39 (ITAYDLCHIGH) is the 'HIGH' region element. Positions 208, 233, and 237 each coordinate Zn(2+). The short motif at 265–269 (KMSKS) is the 'KMSKS' region element. K268 serves as a coordination point for ATP.

The protein belongs to the class-I aminoacyl-tRNA synthetase family. As to quaternary structure, monomer. Requires Zn(2+) as cofactor.

It localises to the cytoplasm. It carries out the reaction tRNA(Cys) + L-cysteine + ATP = L-cysteinyl-tRNA(Cys) + AMP + diphosphate. This Solidesulfovibrio magneticus (strain ATCC 700980 / DSM 13731 / RS-1) (Desulfovibrio magneticus) protein is Cysteine--tRNA ligase.